A 311-amino-acid polypeptide reads, in one-letter code: Glycerol-3-phosphate dehydrogenase [NAD(P)+] (311 aa).

Positions 12, 31, 32, and 96 each coordinate NADPH. Positions 96, 124, and 126 each coordinate sn-glycerol 3-phosphate. Alanine 128 lines the NADPH pocket. Sn-glycerol 3-phosphate-binding residues include lysine 178, aspartate 231, serine 241, arginine 242, and asparagine 243. Lysine 178 functions as the Proton acceptor in the catalytic mechanism. Arginine 242 contributes to the NADPH binding site. The NADPH site is built by valine 266 and glutamate 268.

This sequence belongs to the NAD-dependent glycerol-3-phosphate dehydrogenase family.

Its subcellular location is the cytoplasm. The catalysed reaction is sn-glycerol 3-phosphate + NAD(+) = dihydroxyacetone phosphate + NADH + H(+). It catalyses the reaction sn-glycerol 3-phosphate + NADP(+) = dihydroxyacetone phosphate + NADPH + H(+). Its pathway is membrane lipid metabolism; glycerophospholipid metabolism. Its function is as follows. Catalyzes the reduction of the glycolytic intermediate dihydroxyacetone phosphate (DHAP) to sn-glycerol 3-phosphate (G3P), the key precursor for phospholipid synthesis. The sequence is that of Glycerol-3-phosphate dehydrogenase [NAD(P)+] from Helicobacter hepaticus (strain ATCC 51449 / 3B1).